A 187-amino-acid polypeptide reads, in one-letter code: Transmembrane protein 272 (187 aa).

Transmembrane regions (helical) follow at residues 21–41 (CFVV…FIGM), 52–72 (LIPL…SLLL), 107–127 (IHLL…YWVF), and 149–169 (LYLF…LLLL).

Its subcellular location is the membrane. The sequence is that of Transmembrane protein 272 from Homo sapiens (Human).